A 2341-amino-acid chain; its full sequence is Pecanex-like protein 1 (2341 aa).

Transmembrane regions (helical) follow at residues 28–50 (ATFVNALHLYLWLFLLGLPFTLY) and 57–74 (MIIVAVYCPVIAAVFIVL). The disordered stretch occupies residues 98–163 (FTDQRTKAEQ…SNQIGSGSSR (66 aa)). N-linked (GlcNAc...) asparagine glycosylation occurs at asparagine 109. A compositionally biased stretch (polar residues) spans 143 to 163 (SSRNSYAGLDPSNQIGSGSSR). Asparagine 215 carries an N-linked (GlcNAc...) asparagine glycan. Disordered stretches follow at residues 270 to 294 (HSHSYRKDHRPRGVPRTSSSAVAFP), 311 to 331 (DPVSELESSKPLSGSKESLVE), and 344 to 689 (DLKI…TRAR). Over residues 272 to 282 (HSYRKDHRPRG) the composition is skewed to basic residues. 2 stretches are compositionally biased toward polar residues: residues 320–331 (KPLSGSKESLVE) and 347–356 (INTSQPPTKS). Asparagine 348 carries an N-linked (GlcNAc...) asparagine glycan. Residues 370-388 (SLRSLSTRSSGSTESYCSG) are compositionally biased toward low complexity. N-linked (GlcNAc...) asparagine glycosylation occurs at asparagine 394. Polar residues predominate over residues 394–404 (NSTVSSYKSEQ). Basic and acidic residues-rich tracts occupy residues 430–455 (KKECCAGPEEKNSCASDKRTSSEKIA), 465–478 (HEAKDPTPSDEMHN), and 527–544 (SKVRKDVGGKQKEGDVRP). Residues 554–569 (ASAHKSGRRRTGKKRA) are compositionally biased toward basic residues. Low complexity predominate over residues 605-635 (QSDLSRASSVQSAHQFSSDSSSSTTSHSCQS). N-linked (GlcNAc...) asparagine glycosylation occurs at asparagine 702. The tract at residues 756 to 834 (QVAFPEGEEQ…STAQVKVQSR (79 aa)) is disordered. Low complexity predominate over residues 814–832 (LSLQDGQQGQQSTAQVKVQ). 2 N-linked (GlcNAc...) asparagine glycosylation sites follow: asparagine 852 and asparagine 863. Transmembrane regions (helical) follow at residues 1003-1025 (ILENVLAVILAILVAFLGSILLI), 1032-1049 (IWVFQFCLVIASCQYSLL), and 1067-1089 (IAYSRPVYFCICCGLIWLLDYGS). N-linked (GlcNAc...) asparagine glycosylation is present at asparagine 1091. A helical transmembrane segment spans residues 1110-1132 (FISARDLVIVFTLCFPIVFFIGL). An N-linked (GlcNAc...) asparagine glycan is attached at asparagine 1155. 4 helical membrane passes run 1160–1182 (LLAALYSFICSIVAVALLYGLCY), 1194–1213 (IPVLFSIFCGLLVAVSYHLS), 1266–1288 (LVVCIVIGVLYFAIHVSTVFTVL), and 1295–1312 (VLYTLVGFVGFVTHYVLP). Residues asparagine 1579, asparagine 1720, asparagine 1982, asparagine 2062, and asparagine 2072 are each glycosylated (N-linked (GlcNAc...) asparagine). Disordered stretches follow at residues 2062–2120 (NATT…SPAR) and 2217–2237 (GQSSATDAQPGNTLSPANNSH). 3 stretches are compositionally biased toward polar residues: residues 2069–2078 (PHSNVTQGSI), 2096–2114 (YPPTLGTSHSSHSVQSGLV), and 2217–2236 (GQSSATDAQPGNTLSPANNS). N-linked (GlcNAc...) asparagine glycosylation is found at asparagine 2234 and asparagine 2260.

Belongs to the pecanex family.

It is found in the membrane. In Homo sapiens (Human), this protein is Pecanex-like protein 1.